The primary structure comprises 355 residues: Uroporphyrinogen decarboxylase (355 aa).

Substrate-binding positions include 27–31 (RQAGR), aspartate 78, tyrosine 155, serine 210, and histidine 328.

This sequence belongs to the uroporphyrinogen decarboxylase family. In terms of assembly, homodimer.

The protein localises to the cytoplasm. The catalysed reaction is uroporphyrinogen III + 4 H(+) = coproporphyrinogen III + 4 CO2. It functions in the pathway porphyrin-containing compound metabolism; protoporphyrin-IX biosynthesis; coproporphyrinogen-III from 5-aminolevulinate: step 4/4. Functionally, catalyzes the decarboxylation of four acetate groups of uroporphyrinogen-III to yield coproporphyrinogen-III. This Pseudomonas fluorescens (strain ATCC BAA-477 / NRRL B-23932 / Pf-5) protein is Uroporphyrinogen decarboxylase.